The sequence spans 612 residues: Alpha-glycerophosphate oxidase (612 aa).

An FAD-binding site is contributed by 21–49; that stretch reads DLLIIGGGITGAGVALQAAASGLDTGLIE. Basic and acidic residues predominate over residues 399–408; it reads ETSTSEKELD. The segment at 399–418 is disordered; sequence ETSTSEKELDPSAVSRGSSF.

This sequence belongs to the FAD-dependent glycerol-3-phosphate dehydrogenase family. It depends on FAD as a cofactor.

The protein localises to the cytoplasm. It carries out the reaction sn-glycerol 3-phosphate + O2 = dihydroxyacetone phosphate + H2O2. This Streptococcus pyogenes serotype M6 (strain ATCC BAA-946 / MGAS10394) protein is Alpha-glycerophosphate oxidase (glpO).